We begin with the raw amino-acid sequence, 46 residues long: Escargot/snail protein homolog (46 aa).

C2H2-type zinc fingers lie at residues 1–4 (HIAH), 9–30 (CKCPICGKPFAPWLLQGHIRTH), and 36–46 (SVCQHCNRAFA).

This sequence belongs to the snail C2H2-type zinc-finger protein family.

It localises to the nucleus. This Lithobius forficatus (Centipede) protein is Escargot/snail protein homolog.